A 126-amino-acid polypeptide reads, in one-letter code: C-type natriuretic peptide (126 aa).

Residues 1–23 form the signal peptide; the sequence is MHLSQLLACALLLTLLSLRPSEA. Residues 20–71 are disordered; the sequence is PSEAKPGAPPKVPRTPPAEELAEPQAAGGGQKKGDKAPGGGGANLKGDRSRL. Positions 24 to 73 are excised as a propeptide; that stretch reads KPGAPPKVPRTPPAEELAEPQAAGGGQKKGDKAPGGGGANLKGDRSRLLR. The segment covering 26–35 has biased composition (pro residues); the sequence is GAPPKVPRTP. Residues 46–63 show a composition bias toward gly residues; sequence AGGGQKKGDKAPGGGGAN. A disulfide bridge links C110 with C126.

Belongs to the natriuretic peptide family. Post-translationally, degraded by IDE (in vitro). In terms of tissue distribution, in the kidney, predominantly expressed in the distal tubular cells (at protein level).

It is found in the secreted. Hormone which plays a role in endochondral ossification through regulation of cartilaginous growth plate chondrocytes proliferation and differentiation. May also be vasoactive and natriuretic. Acts by specifically binding and stimulating NPR2 to produce cGMP. Binds the clearance receptor NPR3. The polypeptide is C-type natriuretic peptide (NPPC) (Homo sapiens (Human)).